Reading from the N-terminus, the 337-residue chain is Large ribosomal subunit protein uL3 (337 aa).

The tract at residues 1-26 (MGHAHAPRRGSLGYSPRVRARSQKPK) is disordered.

It belongs to the universal ribosomal protein uL3 family. In terms of assembly, part of the 50S ribosomal subunit. Forms a cluster with proteins L14 and L24e.

One of the primary rRNA binding proteins, it binds directly near the 3'-end of the 23S rRNA, where it nucleates assembly of the 50S subunit. The protein is Large ribosomal subunit protein uL3 of Methanocella arvoryzae (strain DSM 22066 / NBRC 105507 / MRE50).